Consider the following 83-residue polypeptide: Spanin, outer lipoprotein subunit (83 aa).

The first 50 residues, 1 to 50 (MSTLRELRLRRALKEQSMKYRLSIKKTLPRWKGALIGLFLICVRTISGSG), serve as a signal peptide directing secretion.

Belongs to the T7likevirus o-spanin family. Homodimer. Interacts (via C-terminus) with the spanin inner membrane subunit (via C-terminus). Part of the spanin complex which spans the entire periplasmic space. The spanin complex is composed of spanin inner membrane subunit and spanin outer membrane subunit.

It is found in the host cell outer membrane. In terms of biological role, component of the spanin complex that disrupts the host outer membrane and participates in cell lysis during virus exit. The spanin complex conducts the final step in host lysis by disrupting the outer membrane after holin and endolysin action have permeabilized the inner membrane and degraded the host peptidoglycans. Host outer membrane disruption is possibly due to local fusion between the inner and outer membrane performed by the spanin complex. In Escherichia coli (Bacteriophage T3), this protein is Spanin, outer lipoprotein subunit (18.7).